We begin with the raw amino-acid sequence, 312 residues long: Ribosomal protein L11 methyltransferase (312 aa).

Residues T160, G181, D203, and N246 each coordinate S-adenosyl-L-methionine.

It belongs to the methyltransferase superfamily. PrmA family.

The protein resides in the cytoplasm. The enzyme catalyses L-lysyl-[protein] + 3 S-adenosyl-L-methionine = N(6),N(6),N(6)-trimethyl-L-lysyl-[protein] + 3 S-adenosyl-L-homocysteine + 3 H(+). In terms of biological role, methylates ribosomal protein L11. The chain is Ribosomal protein L11 methyltransferase from Staphylococcus aureus (strain bovine RF122 / ET3-1).